Consider the following 438-residue polypeptide: Dolichyl-diphosphooligosaccharide--protein glycosyltransferase 48 kDa subunit (438 aa).

Residues 1–25 form the signal peptide; sequence MASLRLSVLLVSVSWLLLLVSGLRA. The Lumenal segment spans residues 26–408; it reads GPRTLVLMEN…QYERFIPSAY (383 aa). Residues 409–429 form a helical membrane-spanning segment; sequence PYYASAFSVMFGLFIFSIVFL. The Cytoplasmic segment spans residues 430 to 438; that stretch reads HMKEKEKSD.

The protein belongs to the DDOST 48 kDa subunit family. As to quaternary structure, component of the oligosaccharyltransferase (OST) complex.

It is found in the endoplasmic reticulum membrane. It participates in protein modification; protein glycosylation. In terms of biological role, subunit of the oligosaccharyl transferase (OST) complex that catalyzes the initial transfer of a defined glycan (Glc(3)Man(9)GlcNAc(2) in eukaryotes) from the lipid carrier dolichol-pyrophosphate to an asparagine residue within an Asn-X-Ser/Thr consensus motif in nascent polypeptide chains, the first step in protein N-glycosylation. N-glycosylation occurs cotranslationally and the complex associates with the Sec61 complex at the channel-forming translocon complex that mediates protein translocation across the endoplasmic reticulum (ER). All subunits are required for a maximal enzyme activity. Required for the assembly of both SST3A- and SS3B-containing OST complexes. The sequence is that of Dolichyl-diphosphooligosaccharide--protein glycosyltransferase 48 kDa subunit from Xenopus laevis (African clawed frog).